Here is a 778-residue protein sequence, read N- to C-terminus: Endonuclease MutS2 (778 aa).

328-335 serves as a coordination point for ATP; it reads GPNTGGKT. One can recognise a Smr domain in the interval 702–777; it reads LDLRGKRYEE…GSGATIVTFK (76 aa).

This sequence belongs to the DNA mismatch repair MutS family. MutS2 subfamily. In terms of assembly, homodimer. Binds to stalled ribosomes, contacting rRNA.

Functionally, endonuclease that is involved in the suppression of homologous recombination and thus may have a key role in the control of bacterial genetic diversity. In terms of biological role, acts as a ribosome collision sensor, splitting the ribosome into its 2 subunits. Detects stalled/collided 70S ribosomes which it binds and splits by an ATP-hydrolysis driven conformational change. Acts upstream of the ribosome quality control system (RQC), a ribosome-associated complex that mediates the extraction of incompletely synthesized nascent chains from stalled ribosomes and their subsequent degradation. Probably generates substrates for RQC. The protein is Endonuclease MutS2 of Streptococcus pneumoniae serotype 19F (strain G54).